The following is a 57-amino-acid chain: UPF0391 membrane protein XOO1885 (57 aa).

The next 2 membrane-spanning stretches (helical) occupy residues 4–24 (WAIIFAIIGLIAGALGFGGMA) and 33–53 (FLFWAGIIIAIVLFVLGMTIA).

This sequence belongs to the UPF0391 family.

It is found in the cell membrane. The sequence is that of UPF0391 membrane protein XOO1885 from Xanthomonas oryzae pv. oryzae (strain KACC10331 / KXO85).